The sequence spans 977 residues: Synaptonemal complex protein 2-like (977 aa).

Disordered regions lie at residues 447–474 (LGSQ…LSNA), 574–593 (QSTE…NSPL), 642–728 (RNKS…QDIM), and 804–824 (TEKN…VFYS). A compositionally biased stretch (low complexity) spans 449-462 (SQTSEHSSTTKTSS). Residues 463–474 (ANRSVQKSLSNA) show a composition bias toward polar residues. Residues 674-693 (SRKEMHRPEDINPKSPHSAE) are compositionally biased toward basic and acidic residues.

This sequence belongs to the SYCP2 family. Post-translationally, ubiquitinated and gradually degraded by the proteasome during oocyte maturation. In terms of processing, phosphorylated in maturing oocytes, before its degradation. In terms of tissue distribution, expressed in immature oocytes (at protein level). Expressed in the ovary.

The protein localises to the nucleus. It is found in the chromosome. The protein resides in the centromere. Its subcellular location is the nucleolus. Functionally, oocyte-specific protein that localizes to centromeres at the dictyate stage and regulates the survival of primordial oocytes. This Xenopus laevis (African clawed frog) protein is Synaptonemal complex protein 2-like (sycp2l).